An 87-amino-acid polypeptide reads, in one-letter code: Small ribosomal subunit protein bS20 (87 aa).

Positions 1-15 are enriched in basic residues; it reads MANHKSAAKRARQSI. The disordered stretch occupies residues 1-29; sequence MANHKSAAKRARQSIRKTAVNNARKSTVK. A compositionally biased stretch (polar residues) spans 19–29; it reads AVNNARKSTVK.

Belongs to the bacterial ribosomal protein bS20 family.

In terms of biological role, binds directly to 16S ribosomal RNA. This chain is Small ribosomal subunit protein bS20, found in Bdellovibrio bacteriovorus (strain ATCC 15356 / DSM 50701 / NCIMB 9529 / HD100).